The primary structure comprises 238 residues: Cell division protein A (238 aa).

Interacts with CdvB.

It localises to the cytoplasm. It is found in the nucleoid. Its subcellular location is the cell membrane. Part of a cell division machinery. The CdvA, CdvB and CdvC proteins polymerize between segregating nucleoids and persist throughout cell division, forming a successively smaller structure during constriction. CdvA is a membrane interacting protein that recruits ESCRT-III homologs to the membrane. In Sulfolobus acidocaldarius (strain ATCC 33909 / DSM 639 / JCM 8929 / NBRC 15157 / NCIMB 11770), this protein is Cell division protein A.